Here is a 1320-residue protein sequence, read N- to C-terminus: Poly [ADP-ribose] polymerase tankyrase-1 (1320 aa).

The span at 1–15 (MAASRRSQHHHHHHQ) shows a compositional bias: basic residues. Disordered stretches follow at residues 1–88 (MAAS…DGAV) and 111–152 (AGGG…AAGV). Residues 25–46 (SAPPPPPPPPLSPGLAPGPTPA) are compositionally biased toward pro residues. Basic and acidic residues predominate over residues 69–82 (DGSRDPPDRPRSPD). Residues 120–152 (NSASSASSPTSSSSSSPSSPGSSLAESPEAAGV) are compositionally biased toward low complexity. 18 ANK repeats span residues 174 to 202 (GALR…NVNA), 208 to 237 (RKSS…NVHA), 241 to 270 (GGLI…DPNA), 274 to 303 (WNYT…DPNI), 361 to 390 (RKST…DVHA), 394 to 423 (GGLV…CVNA), 427 to 456 (WQFT…DPTL), 514 to 546 (SHET…NVNE), 550 to 579 (DFMT…KMNA), 583 to 612 (LGQT…DPSI), 676 to 705 (RHST…DVHA), 709 to 738 (GGLV…SVNV), 742 to 771 (WKFT…DPTK), 775 to 803 (DGNT…LLDA), 829 to 858 (RNST…DVNA), 862 to 891 (GGLI…CVNA), 895 to 924 (WAFT…DPTM), and 928 to 957 (EGQT…LPTC). One can recognise an SAM domain in the interval 1019 to 1082 (GLDMNISQFL…IKGVERLLGG (64 aa)). Positions 1105–1310 (APEDKEYQSV…YQIMKPEAPS (206 aa)) constitute a PARP catalytic domain. Zn(2+) contacts are provided by C1227, H1230, C1235, and C1238.

Belongs to the ARTD/PARP family. As to quaternary structure, oligomerizes and associates with TNKS2. Interacts with the cytoplasmic domain of LNPEP/Otase in SLC2A4/GLUT4-vesicles. Binds to the N-terminus of telomeric TERF1 via the ANK repeats. Found in a complex with POT1; TERF1 and TINF2. Interacts with AXIN1. Interacts with AXIN2. Interacts with BLZF1 and CASC3. Interacts with NUMA1. Phosphorylated on serine residues by MAPK kinases upon insulin stimulation. Phosphorylated during mitosis. In terms of processing, ubiquitinated by RNF146 when auto-poly-ADP-ribosylated, leading to its degradation. Post-translationally, ADP-ribosylated (-auto). Poly-ADP-ribosylated protein is recognized by RNF146, followed by ubiquitination.

It is found in the cytoplasm. Its subcellular location is the golgi apparatus membrane. The protein localises to the cytoskeleton. The protein resides in the microtubule organizing center. It localises to the centrosome. It is found in the nucleus. Its subcellular location is the nuclear pore complex. The protein localises to the chromosome. The protein resides in the telomere. It localises to the spindle pole. The enzyme catalyses NAD(+) + (ADP-D-ribosyl)n-acceptor = nicotinamide + (ADP-D-ribosyl)n+1-acceptor + H(+).. It catalyses the reaction L-aspartyl-[protein] + NAD(+) = 4-O-(ADP-D-ribosyl)-L-aspartyl-[protein] + nicotinamide. The catalysed reaction is L-glutamyl-[protein] + NAD(+) = 5-O-(ADP-D-ribosyl)-L-glutamyl-[protein] + nicotinamide. Functionally, poly-ADP-ribosyltransferase involved in various processes such as Wnt signaling pathway, telomere length and vesicle trafficking. Acts as an activator of the Wnt signaling pathway by mediating poly-ADP-ribosylation (PARsylation) of AXIN1 and AXIN2, 2 key components of the beta-catenin destruction complex: poly-ADP-ribosylated target proteins are recognized by RNF146, which mediates their ubiquitination and subsequent degradation. Also mediates PARsylation of BLZF1 and CASC3, followed by recruitment of RNF146 and subsequent ubiquitination. Mediates PARsylation of TERF1, thereby contributing to the regulation of telomere length. Involved in centrosome maturation during prometaphase by mediating PARsylation of HEPACAM2/MIKI. May also regulate vesicle trafficking and modulate the subcellular distribution of SLC2A4/GLUT4-vesicles. May be involved in spindle pole assembly through PARsylation of NUMA1. Stimulates 26S proteasome activity. This chain is Poly [ADP-ribose] polymerase tankyrase-1 (Tnks), found in Mus musculus (Mouse).